Reading from the N-terminus, the 118-residue chain is Small ribosomal subunit protein uS13 (118 aa).

Residues 92 to 118 (RKGLPVRGQRTKTNARTRKGPRKPIRK) are disordered.

This sequence belongs to the universal ribosomal protein uS13 family. As to quaternary structure, part of the 30S ribosomal subunit. Forms a loose heterodimer with protein S19. Forms two bridges to the 50S subunit in the 70S ribosome.

Located at the top of the head of the 30S subunit, it contacts several helices of the 16S rRNA. In the 70S ribosome it contacts the 23S rRNA (bridge B1a) and protein L5 of the 50S subunit (bridge B1b), connecting the 2 subunits; these bridges are implicated in subunit movement. Contacts the tRNAs in the A and P-sites. The chain is Small ribosomal subunit protein uS13 from Pseudomonas putida (strain W619).